Here is a 124-residue protein sequence, read N- to C-terminus: Small ribosomal subunit protein uS12 (124 aa).

The residue at position 89 (Asp89) is a 3-methylthioaspartic acid. The segment at Leu104–Lys124 is disordered. Residues Ser113 to Lys124 are compositionally biased toward basic residues.

The protein belongs to the universal ribosomal protein uS12 family. In terms of assembly, part of the 30S ribosomal subunit. Contacts proteins S8 and S17. May interact with IF1 in the 30S initiation complex.

In terms of biological role, with S4 and S5 plays an important role in translational accuracy. Its function is as follows. Interacts with and stabilizes bases of the 16S rRNA that are involved in tRNA selection in the A site and with the mRNA backbone. Located at the interface of the 30S and 50S subunits, it traverses the body of the 30S subunit contacting proteins on the other side and probably holding the rRNA structure together. The combined cluster of proteins S8, S12 and S17 appears to hold together the shoulder and platform of the 30S subunit. This chain is Small ribosomal subunit protein uS12, found in Thiomonas delicata (Thiomonas cuprina).